A 594-amino-acid chain; its full sequence is DNA ligase (594 aa).

Residues 32-36, 81-82, and E118 contribute to the NAD(+) site; these read DEEYD and SL. K120 acts as the N6-AMP-lysine intermediate in catalysis. Residues R141, E181, K299, and K323 each contribute to the NAD(+) site. Residues C417, C420, C436, and C442 each coordinate Zn(2+).

Belongs to the NAD-dependent DNA ligase family. LigA subfamily. It depends on Mg(2+) as a cofactor. Mn(2+) is required as a cofactor.

The catalysed reaction is NAD(+) + (deoxyribonucleotide)n-3'-hydroxyl + 5'-phospho-(deoxyribonucleotide)m = (deoxyribonucleotide)n+m + AMP + beta-nicotinamide D-nucleotide.. DNA ligase that catalyzes the formation of phosphodiester linkages between 5'-phosphoryl and 3'-hydroxyl groups in double-stranded DNA using NAD as a coenzyme and as the energy source for the reaction. It is essential for DNA replication and repair of damaged DNA. The polypeptide is DNA ligase (Blochmanniella floridana).